Consider the following 308-residue polypeptide: Probable acetylxylan esterase A (308 aa).

The first 19 residues, 1–19 (MAPFSFLLTLLLYTLSAGA), serve as a signal peptide directing secretion. N-linked (GlcNAc...) asparagine glycosylation occurs at Asn-141. The active-site Charge relay system is the Ser-151. N-linked (GlcNAc...) asparagine glycosylation occurs at Asn-193.

The protein belongs to the carbohydrate esterase 1 (CE1) family. AxeA subfamily. Monomer.

It is found in the secreted. It catalyses the reaction Deacetylation of xylans and xylo-oligosaccharides.. The protein operates within glycan degradation; xylan degradation. Functionally, acetylxylan esterase involved in the hydrolysis of xylan, a major structural heterogeneous polysaccharide found in plant biomass representing the second most abundant polysaccharide in the biosphere, after cellulose. Degrades acetylated xylans by cleaving acetyl side groups from the hetero-xylan backbone. This chain is Probable acetylxylan esterase A (axeA), found in Aspergillus clavatus (strain ATCC 1007 / CBS 513.65 / DSM 816 / NCTC 3887 / NRRL 1 / QM 1276 / 107).